We begin with the raw amino-acid sequence, 511 residues long: Cytochrome P450 monooxygenase PUL2 (511 aa).

The chain crosses the membrane as a helical span at residues 14–34 (WMAFVYFTPVLFVVLYLLKEW). N-linked (GlcNAc...) asparagine glycans are attached at residues N116, N141, and N442. A heme-binding site is contributed by C462.

The protein belongs to the cytochrome P450 family. Heme is required as a cofactor.

The protein localises to the membrane. It participates in siderophore biosynthesis. Cytochrome P450 monooxygenase; part of the PUL gene cluster that mediates the formation of pulcherrimin, a red iron-containing pigment composed of two cyclized and modified leucine molecules that acts as a siderophore, a chelator that binds iron outside the cell for subsequent uptake. Two leucine molecules are cyclized via a cyclodipeptide synthase, and the resulting diketopiperazine is oxidized by a cytochrome P450 monooxygenase to generate pulcherriminic acid (PA), which can then spontaneously bind iron to form pulcherrimin. The probable cyclodipeptide synthase PUL1 and the cytochrome P450 monooxygenase PUL2 encode the enzymes responsible for the two-step pulcherrimin biosynthesis pathway. This chain is Cytochrome P450 monooxygenase PUL2, found in Kluyveromyces lactis (strain ATCC 8585 / CBS 2359 / DSM 70799 / NBRC 1267 / NRRL Y-1140 / WM37) (Yeast).